Reading from the N-terminus, the 130-residue chain is Small ribosomal subunit protein uS11 (130 aa).

Belongs to the universal ribosomal protein uS11 family. Part of the 30S ribosomal subunit. Interacts with proteins S7 and S18. Binds to IF-3.

In terms of biological role, located on the platform of the 30S subunit, it bridges several disparate RNA helices of the 16S rRNA. Forms part of the Shine-Dalgarno cleft in the 70S ribosome. The sequence is that of Small ribosomal subunit protein uS11 from Gluconobacter oxydans (strain 621H) (Gluconobacter suboxydans).